The sequence spans 220 residues: Vesicle-associated membrane protein 7 (220 aa).

At alanine 2 the chain carries N-acetylalanine; partial. Residues 2–188 (AILFAVVARG…ARAMCMKNLK (187 aa)) lie on the Cytoplasmic side of the membrane. Positions 7–110 (VVARGTTILA…AMNSEFSSVL (104 aa)) constitute a Longin domain. The v-SNARE coiled-coil homology domain maps to 125–185 (KVMETQAQVD…RNLARAMCMK (61 aa)). Phosphoserine occurs at positions 167 and 168. A helical; Anchor for type IV membrane protein transmembrane segment spans residues 189–209 (LTIIIIIVSIVFIYIIVSPLC). Topologically, residues 210 to 220 (GGFTWPSCVKK) are vesicular.

Belongs to the synaptobrevin family. Component of the SNARE complex composed of STX4, SNAP23 and VAMP7 that binds SYT7 during lysosomal exocytosis. Component of the SNARE complex composed of STX7, STX8, VAMP7 and VTI1B that is required for heterotypic fusion of late endosomes with lysosomes. May interact with STX17. Interacts with PICALM. Interacts with RAB21. In terms of tissue distribution, detected in all tissues tested.

It localises to the cytoplasmic vesicle. The protein resides in the secretory vesicle membrane. It is found in the golgi apparatus. Its subcellular location is the trans-Golgi network membrane. The protein localises to the late endosome membrane. It localises to the lysosome membrane. The protein resides in the endoplasmic reticulum membrane. It is found in the phagosome membrane. Its subcellular location is the synapse. The protein localises to the synaptosome. Its function is as follows. Involved in the targeting and/or fusion of transport vesicles to their target membrane during transport of proteins from the early endosome to the lysosome. Required for heterotypic fusion of late endosomes with lysosomes and homotypic lysosomal fusion. Required for calcium regulated lysosomal exocytosis. Involved in the export of chylomicrons from the endoplasmic reticulum to the cis Golgi. Required for exocytosis of mediators during eosinophil and neutrophil degranulation, and target cell killing by natural killer cells. Required for focal exocytosis of late endocytic vesicles during phagosome formation. The polypeptide is Vesicle-associated membrane protein 7 (VAMP7) (Homo sapiens (Human)).